We begin with the raw amino-acid sequence, 300 residues long: Type II methyltransferase M.Cfr9I (300 aa).

The interval 109–129 is disordered; the sequence is RGYRAPDKKNPARAMAVRPDT.

The protein belongs to the N(4)/N(6)-methyltransferase family. N(4) subfamily.

It carries out the reaction a 2'-deoxycytidine in DNA + S-adenosyl-L-methionine = an N(4)-methyl-2'-deoxycytidine in DNA + S-adenosyl-L-homocysteine + H(+). A beta subtype methylase, recognizes the double-stranded sequence 5'-CCCGGG-3', methylates C-2 on both strands, and protects the DNA from cleavage by the Cfr9I endonuclease. The protein is Type II methyltransferase M.Cfr9I of Citrobacter freundii.